Here is a 526-residue protein sequence, read N- to C-terminus: MNNVKELIDSGILKTNKIHYNLPVEELIKIAVEKEGGVIAKNGALCINTGKYTGRSPEDRFIVDEPSVHDHINWNKGNKGISAQVFDNLFNKAMAHVKDKELFVFEGFVGSDLDYRMPIRVINEFAYQNLFASQMFIKPKAGERENFDPEFTVLALPDLKADPAVDGTNSEVFIILNFAQKIVLIGGTRYSGEIKKSIFTVMNYLLPFKDVLPMHCSANIGEDGNVALFFGLSGTGKTTLSADNNRKLIGDDEHGWTANGVFNFEGGCYAKCINLTEEQEPQIWNAIKHGAILENIVIDENTGHIDYDDDRYTENTRAAYPVEYIDDAVLEGKGGIPNTIIFLTADATGVLPPIAKLTKEQAMYHFMSGYTSKLAGTERGIVEPTATFSTCFGGPFMLLKPQTYAKLLGEKIEKYNTRVFLVNTGWTGGPYGIGSRMKLKYTRSMVRAAIKGELDQVEYIKDPIFNLSIPTTCPEVPVEVLEPSKTWDNQDEYDQKANELAKSFVENFKKFDDVSDDIKNVNPKVQ.

Substrate contacts are provided by R55, Y190, and K196. ATP-binding positions include K196, H215, and 231-239 (GLSGTGKTT). Mn(2+) is bound by residues K196 and H215. A Mn(2+)-binding site is contributed by D252. The ATP site is built by E280, R317, and T442. Substrate is bound at residue R317.

The protein belongs to the phosphoenolpyruvate carboxykinase (ATP) family. Requires Mn(2+) as cofactor.

The protein resides in the cytoplasm. The catalysed reaction is oxaloacetate + ATP = phosphoenolpyruvate + ADP + CO2. The protein operates within carbohydrate biosynthesis; gluconeogenesis. Its function is as follows. Involved in the gluconeogenesis. Catalyzes the conversion of oxaloacetate (OAA) to phosphoenolpyruvate (PEP) through direct phosphoryl transfer between the nucleoside triphosphate and OAA. The sequence is that of Phosphoenolpyruvate carboxykinase (ATP) from Alkaliphilus oremlandii (strain OhILAs) (Clostridium oremlandii (strain OhILAs)).